The following is a 153-amino-acid chain: Acetylacetone-cleaving enzyme (153 aa).

As to quaternary structure, homotetramer. Fe cation serves as cofactor.

The enzyme catalyses acetylacetone + O2 = methylglyoxal + acetate + H(+). It functions in the pathway xenobiotic degradation; acetylacetone degradation. Cleaves acetylacetone to equimolar amounts of methylglyoxal and acetate, consuming one equivalent of molecular oxygen. The polypeptide is Acetylacetone-cleaving enzyme (dke1) (Acinetobacter johnsonii).